Consider the following 129-residue polypeptide: Protein Turandot A (129 aa).

An N-terminal signal peptide occupies residues 1-21; sequence MNSLTGFMCCALLLISPLCMG. The N-linked (GlcNAc...) asparagine glycan is linked to Asn49.

This sequence belongs to the Turandot family.

The protein localises to the secreted. A humoral factor that plays a role in stress tolerance; gives increased resistance to the lethal effects of bacterial challenge and stress. Regulated by the JAK/STAT pathway and NF-KB-like Relish pathway in the fat body, upd3 in the hemocytes and Mekk1 in response to septic injury and consequent immune response. In Drosophila yakuba (Fruit fly), this protein is Protein Turandot A (TotA).